A 2129-amino-acid polypeptide reads, in one-letter code: Transcription initiation factor TFIID subunit 1 (2129 aa).

The Protein kinase 1 domain maps to 1–423; that stretch reads MEMESDNSDD…VSQLHWEDDV (423 aa). 4 disordered regions span residues 77-233, 246-348, 377-405, and 445-497; these read AEPP…DVRE, FSRL…PKVA, TKAASTSSQPQLKDERRVKSPEDDVEDPS, and AGWL…AEAP. The span at 79–88 shows a compositional bias: acidic residues; that stretch reads PPSDDEEEED. Basic and acidic residues-rich tracts occupy residues 110-121, 159-170, and 200-215; these read VKREDGAVKAQD, VEAKLTKDDKEL, and DDSKSTDSKDADRKLD. Residues 263–273 are compositionally biased toward basic residues; the sequence is RHVRKRRRKRN. The span at 280–289 shows a compositional bias: polar residues; it reads TTNTGGSDSP. Serine 286, serine 288, and serine 290 each carry phosphoserine. Serine 315 carries the phosphoserine; by autocatalysis modification. Over residues 388–398 the composition is skewed to basic and acidic residues; the sequence is LKDERRVKSPE. Positions 470 to 494 are enriched in low complexity; it reads GSGSSKQGSGASSKKAQQNAQAKPA. Position 603 is a phosphoserine (serine 603). Disordered regions lie at residues 1016–1038, 1149–1208, 1296–1336, 1368–1391, and 1415–1435; these read KPTQTKEEQESQPKRSVTGTDAD, LENM…LATN, AQNQ…PSRK, GMQSSLSQSNPSLADDFDEQSEKE, and KRHGGDDGKRRSGSSSGFTLK. Residues 1019-1028 show a composition bias toward basic and acidic residues; that stretch reads QTKEEQESQP. Residues 1151 to 1160 are compositionally biased toward polar residues; the sequence is NMLSNKKTST. Residues 1163–1183 show a composition bias toward basic and acidic residues; sequence SREREELERQELLRQLDEEHG. The span at 1184–1193 shows a compositional bias: gly residues; it reads GPSGSGGAKG. Over residues 1368 to 1379 the composition is skewed to polar residues; sequence GMQSSLSQSNPS. A Nuclear localization signal motif is present at residues 1442-1448; the sequence is GKKKRRV. Bromo domains are found at residues 1466–1574 and 1588–1696; these read RRRT…LAER and LLDD…LIEF. The 551-residue stretch at 1515–2065 folds into the Protein kinase 2 domain; it reads MDLQTMREYI…QHQQMGQAAS (551 aa). 4 disordered regions span residues 1710-1872, 1973-1992, 2018-2042, and 2101-2129; these read TQER…LDQG, LSHEQDDNGPYNPAEASTSA, NNGMGIDDDLDISESDEEDDGSRVR, and QHQVMPPMQSEQLQQQQTPQGDNDYAWTF. Serine 1740 bears the Phosphoserine mark. Acidic residues predominate over residues 1836–1863; sequence LDEDLQCSTDDEDDDEEEDFQEVSEDEN. A compositionally biased stretch (acidic residues) spans 2023-2037; it reads IDDDLDISESDEEDD. Residues 2101–2120 are compositionally biased toward low complexity; it reads QHQVMPPMQSEQLQQQQTPQ.

This sequence belongs to the TAF1 family. As to quaternary structure, belongs to the TFIID complex which is composed of TATA binding protein (Tbp) and a number of TBP-associated factors (Tafs). Taf1 is the largest component of the TFIID complex. Interacts with Tbp, Taf2, Taf4 and Taf6. The cofactor is Mg(2+).

The protein localises to the nucleus. It carries out the reaction L-seryl-[protein] + ATP = O-phospho-L-seryl-[protein] + ADP + H(+). It catalyses the reaction L-threonyl-[protein] + ATP = O-phospho-L-threonyl-[protein] + ADP + H(+). Autophosphorylates on Ser residues. Functionally, TFIID is a multimeric protein complex that plays a central role in mediating promoter responses to various activators and repressors. Largest component and core scaffold of the complex. Contains N- and C-terminal Ser/Thr kinase domains which can autophosphorylate or transphosphorylate other transcription factors. Possesses DNA-binding activity. Essential for progression of the G1 phase of the cell cycle. Negative regulator of the TATA box-binding activity of Tbp. The chain is Transcription initiation factor TFIID subunit 1 (Taf1) from Drosophila melanogaster (Fruit fly).